Reading from the N-terminus, the 282-residue chain is UDP-3-O-acyl-N-acetylglucosamine deacetylase (282 aa).

Zn(2+) is bound by residues His74, His226, and Asp230. The active-site Proton donor is the His253.

It belongs to the LpxC family. Zn(2+) serves as cofactor.

It catalyses the reaction a UDP-3-O-[(3R)-3-hydroxyacyl]-N-acetyl-alpha-D-glucosamine + H2O = a UDP-3-O-[(3R)-3-hydroxyacyl]-alpha-D-glucosamine + acetate. It participates in glycolipid biosynthesis; lipid IV(A) biosynthesis; lipid IV(A) from (3R)-3-hydroxytetradecanoyl-[acyl-carrier-protein] and UDP-N-acetyl-alpha-D-glucosamine: step 2/6. In terms of biological role, catalyzes the hydrolysis of UDP-3-O-myristoyl-N-acetylglucosamine to form UDP-3-O-myristoylglucosamine and acetate, the committed step in lipid A biosynthesis. The chain is UDP-3-O-acyl-N-acetylglucosamine deacetylase from Aquifex aeolicus (strain VF5).